Consider the following 320-residue polypeptide: o-succinylbenzoate synthase (320 aa).

Lysine 133 acts as the Proton donor in catalysis. Mg(2+) is bound by residues aspartate 161, glutamate 190, and aspartate 213. The Proton acceptor role is filled by lysine 235.

Belongs to the mandelate racemase/muconate lactonizing enzyme family. MenC type 1 subfamily. A divalent metal cation is required as a cofactor.

It catalyses the reaction (1R,6R)-6-hydroxy-2-succinyl-cyclohexa-2,4-diene-1-carboxylate = 2-succinylbenzoate + H2O. It participates in quinol/quinone metabolism; 1,4-dihydroxy-2-naphthoate biosynthesis; 1,4-dihydroxy-2-naphthoate from chorismate: step 4/7. Its pathway is quinol/quinone metabolism; menaquinone biosynthesis. Converts 2-succinyl-6-hydroxy-2,4-cyclohexadiene-1-carboxylate (SHCHC) to 2-succinylbenzoate (OSB). In Escherichia coli O7:K1 (strain IAI39 / ExPEC), this protein is o-succinylbenzoate synthase.